A 184-amino-acid chain; its full sequence is Protein GrpE (184 aa).

The tract at residues 1 to 32 (MEEQKQTPSTPTPDTAAEAAVNAATAAPETAG) is disordered. The span at 12 to 32 (TPDTAAEAAVNAATAAPETAG) shows a compositional bias: low complexity.

Belongs to the GrpE family. In terms of assembly, homodimer.

It is found in the cytoplasm. Participates actively in the response to hyperosmotic and heat shock by preventing the aggregation of stress-denatured proteins, in association with DnaK and GrpE. It is the nucleotide exchange factor for DnaK and may function as a thermosensor. Unfolded proteins bind initially to DnaJ; upon interaction with the DnaJ-bound protein, DnaK hydrolyzes its bound ATP, resulting in the formation of a stable complex. GrpE releases ADP from DnaK; ATP binding to DnaK triggers the release of the substrate protein, thus completing the reaction cycle. Several rounds of ATP-dependent interactions between DnaJ, DnaK and GrpE are required for fully efficient folding. This Cupriavidus pinatubonensis (strain JMP 134 / LMG 1197) (Cupriavidus necator (strain JMP 134)) protein is Protein GrpE.